Reading from the N-terminus, the 339-residue chain is Probable G-protein coupled receptor 33 (339 aa).

Residues 1–30 (MDLINSSTHVINVSTSLTNSTGVPTPAPKT) lie on the Extracellular side of the membrane. Asparagine 5, asparagine 12, and asparagine 19 each carry an N-linked (GlcNAc...) asparagine glycan. A helical transmembrane segment spans residues 31 to 53 (IIAASLFMAFIIGVISNGLYLWM). At 54–64 (LQFKMQRTVNT) the chain is on the cytoplasmic side. Residues 65-86 (LLFFHLILSYFISTLILPFMAT) traverse the membrane as a helical segment. Residues 87-103 (SFLQDNHWVFGSVLCKA) lie on the Extracellular side of the membrane. The cysteines at positions 101 and 179 are disulfide-linked. The helical transmembrane segment at 104 to 124 (FNSTLSVSMFASVFFLSAISV) threads the bilayer. Over 125–143 (ARYYLILHPVWSQQHRTPH) the chain is Cytoplasmic. The chain crosses the membrane as a helical span at residues 144 to 165 (WASRIALQIWISATILSIPYLV). The Extracellular segment spans residues 166–209 (FRTTHDDHKGRIKCQNNYIVSTDWESKEHQTLGQWIHAACFVGR). A helical membrane pass occupies residues 210–230 (FLLGFLLPFLVIIFCYKRVAT). Residues 231 to 246 (KMKEKGLFKSSKPFKV) lie on the Cytoplasmic side of the membrane. Residues 247–268 (MVTAVISFFVCWMPYHVHSGLV) traverse the membrane as a helical segment. The Extracellular portion of the chain corresponds to 269–283 (LTKSQPLPLHLTLGL). Residues 284–303 (AVVTISFNTVVSPVLYLFTG) traverse the membrane as a helical segment. Topologically, residues 304 to 339 (ENFKVFKKSILALFNSTFSDISSTERTQTLNSETEI) are cytoplasmic.

This sequence belongs to the G-protein coupled receptor 1 family. In terms of tissue distribution, expressed predominantly in lung, spleen and testis.

The protein resides in the cell membrane. Functionally, orphan receptor; could be a chemoattractant receptor. This Mus musculus (Mouse) protein is Probable G-protein coupled receptor 33 (Gpr33).